The primary structure comprises 95 residues: Aspartyl/glutamyl-tRNA(Asn/Gln) amidotransferase subunit C (95 aa).

It belongs to the GatC family. In terms of assembly, heterotrimer of A, B and C subunits.

It catalyses the reaction L-glutamyl-tRNA(Gln) + L-glutamine + ATP + H2O = L-glutaminyl-tRNA(Gln) + L-glutamate + ADP + phosphate + H(+). The enzyme catalyses L-aspartyl-tRNA(Asn) + L-glutamine + ATP + H2O = L-asparaginyl-tRNA(Asn) + L-glutamate + ADP + phosphate + 2 H(+). Allows the formation of correctly charged Asn-tRNA(Asn) or Gln-tRNA(Gln) through the transamidation of misacylated Asp-tRNA(Asn) or Glu-tRNA(Gln) in organisms which lack either or both of asparaginyl-tRNA or glutaminyl-tRNA synthetases. The reaction takes place in the presence of glutamine and ATP through an activated phospho-Asp-tRNA(Asn) or phospho-Glu-tRNA(Gln). In Pseudomonas paraeruginosa (strain DSM 24068 / PA7) (Pseudomonas aeruginosa (strain PA7)), this protein is Aspartyl/glutamyl-tRNA(Asn/Gln) amidotransferase subunit C.